A 380-amino-acid polypeptide reads, in one-letter code: MGIKGLAQVLSEHAPASVKHNDIKNYFGRKVAIDASMSLYQFLIQVRSQDGQQLMNEQGETTSHLMGMFYRTLRIVDNGIKPCFVFDGKPPTLKSGELAKRVARHQKAREDQEETKEVGTAEMVDRFAKRTVKVTRQHNDEAKRLLELMGIPFVNAPCEAEAQCAALARSGKVYAAASEDMDTLCFQAPVLLRHLTFSEQRKEPISEYNIEKALNGLDMSVEQFVDLCILLGCDYCEPIRGVGPARAVELIRQYGTLDRFVKEADRSKYPIPEDWPYEDARRLFLDAEVLPGEEIELKWKSPDADGIIQFLVKEKGFNEDRVKLGINRLEKASKTIPQGRLDSFFKPVPSSPKKPVDTKSKGSAKRKRDSNKGGESKKKR.

An N-domain region spans residues 1–105 (MGIKGLAQVL…GELAKRVARH (105 aa)). Asp-34 contacts Mg(2+). DNA contacts are provided by Arg-47 and Arg-71. Residues Asp-87, Glu-159, Glu-161, Asp-180, and Asp-182 each contribute to the Mg(2+) site. The I-domain stretch occupies residues 123–254 (MVDRFAKRTV…ARAVELIRQY (132 aa)). Residue Glu-159 participates in DNA binding. DNA is bound by residues Gly-232 and Asp-234. Asp-234 is a Mg(2+) binding site. The segment at 337 to 345 (PQGRLDSFF) is interaction with PCNA. Residues 340-380 (RLDSFFKPVPSSPKKPVDTKSKGSAKRKRDSNKGGESKKKR) form a disordered region. Residues 342-353 (DSFFKPVPSSPK) show a composition bias toward low complexity. Residues Ser-350 and Ser-351 each carry the phosphoserine modification. Residues 370–380 (SNKGGESKKKR) are compositionally biased toward basic and acidic residues.

The protein belongs to the XPG/RAD2 endonuclease family. FEN1 subfamily. In terms of assembly, interacts with PCNA. Three molecules of rad2 bind to one PCNA trimer with each molecule binding to one PCNA monomer. PCNA stimulates the nuclease activity without altering cleavage specificity. It depends on Mg(2+) as a cofactor. Post-translationally, phosphorylated. Phosphorylation upon DNA damage induces relocalization to the nuclear plasma.

The protein resides in the nucleus. It is found in the nucleolus. It localises to the nucleoplasm. Its subcellular location is the mitochondrion. Structure-specific nuclease with 5'-flap endonuclease and 5'-3' exonuclease activities involved in DNA replication and repair. During DNA replication, cleaves the 5'-overhanging flap structure that is generated by displacement synthesis when DNA polymerase encounters the 5'-end of a downstream Okazaki fragment. It enters the flap from the 5'-end and then tracks to cleave the flap base, leaving a nick for ligation. Also involved in the long patch base excision repair (LP-BER) pathway, by cleaving within the apurinic/apyrimidinic (AP) site-terminated flap. Acts as a genome stabilization factor that prevents flaps from equilibrating into structures that lead to duplications and deletions. Also possesses 5'-3' exonuclease activity on nicked or gapped double-stranded DNA, and exhibits RNase H activity. Also involved in replication and repair of rDNA and in repairing mitochondrial DNA. The chain is Flap endonuclease 1 from Schizosaccharomyces pombe (strain 972 / ATCC 24843) (Fission yeast).